The sequence spans 379 residues: MAKRDYYEVLGISKDASKDEIKKAYRKLSKKYHPDINKEEGADEKFKEISEAYEVLSDDNKRASYDQFGHDGPQGFGGQGFNGSDFGGFSGFGGGGFEDIFSSFFGGGRQRDPNAPQKGDDLQYTMTLTFEEAVFGTTKEISIRKDVTCETCHGDGAKPGTSKKTCSYCNGAGHVAVEQNTILGRVRTEQVCPKCNGSGQEFEEACPTCHGKGTENKTVKLEVKVPEGVDNEQQIRLAGEGSPGVNGGPAGDLYVVFRVKPSETFKRDGDDIYYKLNVSFPQAALGDEIKIPTLNNEVMLTIPAGTQTGKQFRLKEKGIKNVHGYGYGDLYVDIKVVTPTKLTDRQKELMKEFAQLNGEEINEQPSNFKDRAKRFFKGE.

In terms of domain architecture, J spans 5–69; the sequence is DYYEVLGISK…NKRASYDQFG (65 aa). The CR-type zinc finger occupies 136–218; it reads GTTKEISIRK…CHGKGTENKT (83 aa). Cys-149, Cys-152, Cys-166, Cys-169, Cys-192, Cys-195, Cys-206, and Cys-209 together coordinate Zn(2+). CXXCXGXG motif repeat units follow at residues 149-156, 166-173, 192-199, and 206-213; these read CETCHGDG, CSYCNGAG, CPKCNGSG, and CPTCHGKG.

This sequence belongs to the DnaJ family. As to quaternary structure, homodimer. The cofactor is Zn(2+).

The protein localises to the cytoplasm. In terms of biological role, participates actively in the response to hyperosmotic and heat shock by preventing the aggregation of stress-denatured proteins and by disaggregating proteins, also in an autonomous, DnaK-independent fashion. Unfolded proteins bind initially to DnaJ; upon interaction with the DnaJ-bound protein, DnaK hydrolyzes its bound ATP, resulting in the formation of a stable complex. GrpE releases ADP from DnaK; ATP binding to DnaK triggers the release of the substrate protein, thus completing the reaction cycle. Several rounds of ATP-dependent interactions between DnaJ, DnaK and GrpE are required for fully efficient folding. Also involved, together with DnaK and GrpE, in the DNA replication of plasmids through activation of initiation proteins. This Staphylococcus aureus (strain USA300 / TCH1516) protein is Chaperone protein DnaJ.